We begin with the raw amino-acid sequence, 187 residues long: Anterior gradient protein 1 (187 aa).

Positions 1–20 (MQTGLSLVCLVLLCSALGEA) are cleaved as a signal peptide.

The protein belongs to the AGR family.

Its subcellular location is the secreted. Functionally, probably involved in cement gland formation. The chain is Anterior gradient protein 1 (ag1) from Xenopus tropicalis (Western clawed frog).